The following is a 186-amino-acid chain: dCTP deaminase (186 aa).

107 to 112 (KSTYAR) provides a ligand contact to dCTP. The Proton donor/acceptor role is filled by glutamate 133. DCTP-binding residues include glutamine 152, tyrosine 166, and glutamine 176.

The protein belongs to the dCTP deaminase family. In terms of assembly, homotrimer.

The enzyme catalyses dCTP + H2O + H(+) = dUTP + NH4(+). Its pathway is pyrimidine metabolism; dUMP biosynthesis; dUMP from dCTP (dUTP route): step 1/2. Its function is as follows. Catalyzes the deamination of dCTP to dUTP. The polypeptide is dCTP deaminase (Campylobacter jejuni subsp. jejuni serotype O:2 (strain ATCC 700819 / NCTC 11168)).